We begin with the raw amino-acid sequence, 345 residues long: Phenylalanine--tRNA ligase alpha subunit (345 aa).

Residue glutamate 266 participates in Mg(2+) binding.

The protein belongs to the class-II aminoacyl-tRNA synthetase family. Phe-tRNA synthetase alpha subunit type 1 subfamily. As to quaternary structure, tetramer of two alpha and two beta subunits. It depends on Mg(2+) as a cofactor.

The protein resides in the cytoplasm. It catalyses the reaction tRNA(Phe) + L-phenylalanine + ATP = L-phenylalanyl-tRNA(Phe) + AMP + diphosphate + H(+). The sequence is that of Phenylalanine--tRNA ligase alpha subunit from Burkholderia lata (strain ATCC 17760 / DSM 23089 / LMG 22485 / NCIMB 9086 / R18194 / 383).